The following is a 316-amino-acid chain: Acetyl-coenzyme A carboxylase carboxyl transferase subunit alpha (316 aa).

In terms of domain architecture, CoA carboxyltransferase C-terminal spans 39–293 (RLQDKSHALT…RQTLLAQLES (255 aa)).

The protein belongs to the AccA family. As to quaternary structure, acetyl-CoA carboxylase is a heterohexamer composed of biotin carboxyl carrier protein (AccB), biotin carboxylase (AccC) and two subunits each of ACCase subunit alpha (AccA) and ACCase subunit beta (AccD).

It localises to the cytoplasm. The catalysed reaction is N(6)-carboxybiotinyl-L-lysyl-[protein] + acetyl-CoA = N(6)-biotinyl-L-lysyl-[protein] + malonyl-CoA. It participates in lipid metabolism; malonyl-CoA biosynthesis; malonyl-CoA from acetyl-CoA: step 1/1. In terms of biological role, component of the acetyl coenzyme A carboxylase (ACC) complex. First, biotin carboxylase catalyzes the carboxylation of biotin on its carrier protein (BCCP) and then the CO(2) group is transferred by the carboxyltransferase to acetyl-CoA to form malonyl-CoA. The polypeptide is Acetyl-coenzyme A carboxylase carboxyl transferase subunit alpha (Azotobacter vinelandii (strain DJ / ATCC BAA-1303)).